We begin with the raw amino-acid sequence, 578 residues long: Arginine--tRNA ligase (578 aa).

Residues 122 to 132 (PNVAKEMHVGH) carry the 'HIGH' region motif.

This sequence belongs to the class-I aminoacyl-tRNA synthetase family. Monomer.

It is found in the cytoplasm. It carries out the reaction tRNA(Arg) + L-arginine + ATP = L-arginyl-tRNA(Arg) + AMP + diphosphate. This Shigella sonnei (strain Ss046) protein is Arginine--tRNA ligase.